The primary structure comprises 122 residues: Large ribosomal subunit protein uL18 (122 aa).

This sequence belongs to the universal ribosomal protein uL18 family. Part of the 50S ribosomal subunit; part of the 5S rRNA/L5/L18/L25 subcomplex. Contacts the 5S and 23S rRNAs.

Its function is as follows. This is one of the proteins that bind and probably mediate the attachment of the 5S RNA into the large ribosomal subunit, where it forms part of the central protuberance. The polypeptide is Large ribosomal subunit protein uL18 (Syntrophotalea carbinolica (strain DSM 2380 / NBRC 103641 / GraBd1) (Pelobacter carbinolicus)).